The primary structure comprises 314 residues: DNA oxidative demethylase ALKBH2 (314 aa).

The span at 1–28 shows a compositional bias: polar residues; that stretch reads MTNPLNSTAANRSNQPSSDGISDGQITN. The segment at 1 to 75 is disordered; it reads MTNPLNSTAA…KRFHYHQDQR (75 aa). The span at 57 to 75 shows a compositional bias: basic and acidic residues; sequence NGKDDSDTKKRFHYHQDQR. Substrate-binding positions include tryptophan 132 and 160-163; that span reads ALVY. In terms of domain architecture, Fe2OG dioxygenase spans 194-314; it reads RFNSLLLNRY…RINLTFRLVL (121 aa). 201–203 contacts 2-oxoglutarate; that stretch reads NRY. Residues histidine 213 and aspartate 215 each contribute to the Fe cation site. Position 216 (aspartate 216) interacts with substrate. Residues 242–271 are disordered; sequence KKDEESSQGKTGDSGPAKKRLKRSSREDQQ. Histidine 293 serves as a coordination point for Fe cation. Residues arginine 305 and 305-311 each bind 2-oxoglutarate; that span reads RINLTFR.

The protein belongs to the alkB family. Fe(2+) is required as a cofactor. Expressed ubiquitously, including in seedlings, leaves and flowers.

It is found in the nucleus. The catalysed reaction is a methylated nucleobase within DNA + 2-oxoglutarate + O2 = a nucleobase within DNA + formaldehyde + succinate + CO2. Dioxygenase that repairs alkylated DNA containing 1-methyladenine and 1-ethenoadenine by oxidative demethylation. Accepts double-stranded and single-stranded substrates, with a preference for dsDNA over ssDNA. Confers resistance to methylating agents such as methylmethanesulphonate (MMS). This Arabidopsis thaliana (Mouse-ear cress) protein is DNA oxidative demethylase ALKBH2 (ALKBH2).